Consider the following 168-residue polypeptide: CASP-like protein 1U1 (168 aa).

Over 1–6 (MDGAAR) the chain is Cytoplasmic. A helical membrane pass occupies residues 7–27 (AVSLFFRIAVVGLSVAAAVVM). Topologically, residues 28-49 (ATASQAFPFNYGGAVSYTKYPA) are extracellular. The helical transmembrane segment at 50–70 (FVYFVVAAVVSAVCSAAALYL) threads the bilayer. Over 71–80 (SVVREAAAGW) the chain is Cytoplasmic. A helical membrane pass occupies residues 81–101 (AVALLDVVTMGLLFSAAGAVF). Residues 102–138 (AVRRMAPLYLGVAGADTVAGRWVNGEFCHAAGAFCWR) lie on the Extracellular side of the membrane. A helical membrane pass occupies residues 139–159 (VTTSAIICAFAAAAVSVAVLT). Topologically, residues 160-168 (KGARHRGKH) are cytoplasmic.

It belongs to the Casparian strip membrane proteins (CASP) family. Homodimer and heterodimers.

Its subcellular location is the cell membrane. The protein is CASP-like protein 1U1 of Oryza sativa subsp. japonica (Rice).